The chain runs to 202 residues: Xanthine phosphoribosyltransferase (202 aa).

Residues L20 and N27 each contribute to the xanthine site. 128–132 (ASGGT) serves as a coordination point for 5-phospho-alpha-D-ribose 1-diphosphate. Residue K156 coordinates xanthine.

The protein belongs to the purine/pyrimidine phosphoribosyltransferase family. Xpt subfamily. In terms of assembly, homodimer.

It localises to the cytoplasm. It carries out the reaction XMP + diphosphate = xanthine + 5-phospho-alpha-D-ribose 1-diphosphate. The protein operates within purine metabolism; XMP biosynthesis via salvage pathway; XMP from xanthine: step 1/1. Its function is as follows. Converts the preformed base xanthine, a product of nucleic acid breakdown, to xanthosine 5'-monophosphate (XMP), so it can be reused for RNA or DNA synthesis. The sequence is that of Xanthine phosphoribosyltransferase from Deinococcus geothermalis (strain DSM 11300 / CIP 105573 / AG-3a).